The primary structure comprises 250 residues: Copper homeostasis protein cutC homolog (250 aa).

The protein belongs to the CutC family.

Involved in copper homeostasis. Affects body morphology and length, egg laying and brood size. The polypeptide is Copper homeostasis protein cutC homolog (cutc-1) (Caenorhabditis elegans).